We begin with the raw amino-acid sequence, 410 residues long: Dipeptidase 1 (410 aa).

An N-terminal signal peptide occupies residues 1 to 16; that stretch reads MWTGWWLWPLVAVCTA. Zn(2+)-binding residues include His36 and Asp38. Asn57 and Asn62 each carry an N-linked (GlcNAc...) asparagine glycan. A disulfide bridge links Cys87 with Cys170. Residue Glu141 coordinates Zn(2+). His168 lines the substrate pocket. Positions 214 and 235 each coordinate Zn(2+). The cysteines at positions 242 and 274 are disulfide-linked. Substrate is bound at residue Arg246. Asn279 carries N-linked (GlcNAc...) asparagine glycosylation. Asp304 serves as a coordination point for substrate. Residue Ser384 is the site of GPI-anchor amidated serine attachment. A propeptide spans 385-410 (removed in mature form); sequence GAPSLHLQPGTLLASLVTLLLSLCLL.

The protein belongs to the metallo-dependent hydrolases superfamily. Peptidase M19 family. As to quaternary structure, homodimer; disulfide-linked. Zn(2+) serves as cofactor.

It localises to the apical cell membrane. It catalyses the reaction an L-aminoacyl-L-amino acid + H2O = 2 an L-alpha-amino acid. The catalysed reaction is leukotriene D4 + H2O = leukotriene E4 + glycine. It carries out the reaction L-cystine-bis-glycine + 2 H2O = L-cystine + 2 glycine. The enzyme catalyses a beta-lactam + H2O = a substituted beta-amino acid. It catalyses the reaction glycyldehydrophenylalanine + H2O = 2,3-didehydrophenylalanine + glycine. Inhibited by L-penicillamine. Inhibited by cilastatin. Its function is as follows. Hydrolyzes a wide range of dipeptides including the conversion of leukotriene D4 to leukotriene E4. Hydrolyzes cystinyl-bis-glycine (cys-bis-gly) formed during glutathione degradation. Also possesses beta lactamase activity and hydrolytically inactivates beta-lactam antibiotics. In terms of biological role, independently of its dipeptidase activity, acts as an adhesion receptor for neutrophil recruitment from bloodstream into inflamed lungs and liver. In Bos taurus (Bovine), this protein is Dipeptidase 1 (DPEP1).